The chain runs to 924 residues: 104 kDa microneme/rhoptry antigen (924 aa).

Residues 1–19 form the signal peptide; it reads MKFLILLFNILCLFPVLAA. A disordered region spans residues 490-907; the sequence is SKKKLAPITE…KKPKKPDSAY (418 aa). Composition is skewed to basic and acidic residues over residues 522–532 and 573–588; these read PGDKEGSEGHK and GPKD…EPRK. The span at 592-617 shows a compositional bias: low complexity; it reads PRTASPTRRPSPKLPQLSKLPKSTSP. Basic and acidic residues predominate over residues 653–673; it reads SFKEKFYDDYSKAASRSKETK. The span at 724–736 shows a compositional bias: low complexity; it reads SPSTSPSEFFTPP. Composition is skewed to basic and acidic residues over residues 737-747, 770-783, and 816-825; these read ESKRTRFHETP, KSPD…RSPS, and DPGRMAKDAS. Acidic residues predominate over residues 857–867; that stretch reads DDEGTEADDEE. The span at 868 to 878 shows a compositional bias: basic and acidic residues; sequence THPPEERQKTE. The span at 879 to 901 shows a compositional bias: basic residues; it reads VRRRRPPKKPSKSPRPSKPKKPK. Asp904 is lipidated: GPI-anchor amidated aspartate. Positions 905–924 are cleaved as a propeptide — removed in mature form; sequence SAYIPSILAILVVSLIVGIL.

The protein localises to the cell membrane. This is 104 kDa microneme/rhoptry antigen from Theileria parva (East coast fever infection agent).